A 277-amino-acid chain; its full sequence is 2-dehydro-3-deoxyphosphooctonate aldolase (277 aa).

It belongs to the KdsA family.

Its subcellular location is the cytoplasm. It catalyses the reaction D-arabinose 5-phosphate + phosphoenolpyruvate + H2O = 3-deoxy-alpha-D-manno-2-octulosonate-8-phosphate + phosphate. Its pathway is carbohydrate biosynthesis; 3-deoxy-D-manno-octulosonate biosynthesis; 3-deoxy-D-manno-octulosonate from D-ribulose 5-phosphate: step 2/3. It participates in bacterial outer membrane biogenesis; lipopolysaccharide biosynthesis. The protein is 2-dehydro-3-deoxyphosphooctonate aldolase of Syntrophotalea carbinolica (strain DSM 2380 / NBRC 103641 / GraBd1) (Pelobacter carbinolicus).